The primary structure comprises 57 residues: Preprotein translocase subunit SecG (57 aa).

At 1–33 (MPSSKKKKENVPVMSMAGLIRYYEEEHEKYKVD) the chain is on the cytoplasmic side. A helical transmembrane segment spans residues 34-55 (PIYVIIASIVLVAVVVAVTKII). The Extracellular portion of the chain corresponds to 56–57 (PP).

It belongs to the SEC61-beta family. Component of the protein translocase complex. Heterotrimer consisting of alpha (SecY), beta (SecG) and gamma (SecE) subunits. Can form oligomers of the heterotrimer.

It is found in the cell membrane. In terms of biological role, involved in protein export. The function of the beta subunit is unknown, but it may be involved in stabilization of the trimeric complex. This Metallosphaera sedula (strain ATCC 51363 / DSM 5348 / JCM 9185 / NBRC 15509 / TH2) protein is Preprotein translocase subunit SecG.